Reading from the N-terminus, the 702-residue chain is MA3 DOMAIN-CONTAINING TRANSLATION REGULATORY FACTOR 1 (702 aa).

The segment at 39 to 66 (LNIKSPTGGKGPVAGIPNRHVRRTHSGK) is disordered. Residues 57–66 (RHVRRTHSGK) are compositionally biased toward basic residues. Residues 122–243 (DYKKSVVSII…PPVFLVRSKK (122 aa)) form the MI 1 domain. The Nuclear localization signal 1 motif lies at 273 to 280 (EKKWGGST). MI domains lie at 286–407 (ETKK…TSDQ), 420–541 (QYKK…DIST), and 583–702 (DAKD…SATQ). Positions 458–465 (LKRLITLA) match the Nuclear localization signal 2 motif.

Belongs to the PDCD4 family. Binds to EIF4A1, S6K1 and S6K2. The association with ribosomes is modulated by cellular energy status and TOR activity. Post-translationally, phosphorylation by S6 kinases (e.g. S6K1 and S6K2) is modulated by cellular energy status and TOR activity. In terms of tissue distribution, mostly expressed in vegetative tissues, such as leaves, roots and stems, and, to a lower extent, in reproductive tissues, such as flower buds and flowers.

The protein localises to the nucleus. It is found in the cytoplasm. The protein resides in the cytosol. Involved in target of rapamycin (TOR)-regulated translation control, especially under energy-deficient conditions. This chain is MA3 DOMAIN-CONTAINING TRANSLATION REGULATORY FACTOR 1, found in Arabidopsis thaliana (Mouse-ear cress).